A 351-amino-acid polypeptide reads, in one-letter code: Phosphoribosylformylglycinamidine cyclo-ligase (351 aa).

This sequence belongs to the AIR synthase family.

It localises to the cytoplasm. The catalysed reaction is 2-formamido-N(1)-(5-O-phospho-beta-D-ribosyl)acetamidine + ATP = 5-amino-1-(5-phospho-beta-D-ribosyl)imidazole + ADP + phosphate + H(+). The protein operates within purine metabolism; IMP biosynthesis via de novo pathway; 5-amino-1-(5-phospho-D-ribosyl)imidazole from N(2)-formyl-N(1)-(5-phospho-D-ribosyl)glycinamide: step 2/2. The sequence is that of Phosphoribosylformylglycinamidine cyclo-ligase from Idiomarina loihiensis (strain ATCC BAA-735 / DSM 15497 / L2-TR).